The sequence spans 436 residues: Homeobox protein PKNOX1 (436 aa).

Positions 1–20 are enriched in polar residues; that stretch reads MMATQTLSIDSYQDGQQMQV. The segment at 1–49 is disordered; the sequence is MMATQTLSIDSYQDGQQMQVVTELKTEQDPNCSEPDAEGVSPPPVESQT. 2 positions are modified to phosphoserine: Ser-33 and Ser-41. Residues 80 to 163 form the MEIS N-terminal domain; sequence GSEGTTSASF…MNSETLLSGE (84 aa). Residues 259–321 constitute a DNA-binding region (homeobox; TALE-type); that stretch reads SKNKRGVLPK…NARRRILQPM (63 aa). The interval 401–436 is disordered; it reads AGQSEDESVDSTEEDAGALAPAHISGLVLENSDSLQ. Residues 404–416 are compositionally biased toward acidic residues; that stretch reads SEDESVDSTEEDA.

This sequence belongs to the TALE/MEIS homeobox family. As to quaternary structure, interacts with MN1. Ubiquitous. Isoform 2 is expressed in all examined tissues except in bone marrow.

It localises to the nucleus. Functionally, activates transcription in the presence of PBX1A and HOXA1. This Homo sapiens (Human) protein is Homeobox protein PKNOX1.